We begin with the raw amino-acid sequence, 673 residues long: B3 domain-containing protein Os01g0905400 (673 aa).

Over residues 1-34 the composition is skewed to basic and acidic residues; that stretch reads MVELIKVPKIEQEEGNADSHGKEKADVVHEEKTE. A disordered region spans residues 1-44; that stretch reads MVELIKVPKIEQEEGNADSHGKEKADVVHEEKTEKVKRRRKRVS. A DNA-binding region (TF-B3 1) is located at residues 79 to 172; the sequence is LPSFFKIMVG…VFTVQIFAIS (94 aa). Residues 315–337 are disordered; that stretch reads PSFSYPESSNVMTADKESERSHQ. The span at 328 to 337 shows a compositional bias: basic and acidic residues; it reads ADKESERSHQ. Residues 576-671 constitute a DNA-binding region (TF-B3 2); it reads SKKFCITIPP…ELSFQVLVPN (96 aa).

The protein resides in the nucleus. The protein is B3 domain-containing protein Os01g0905400 of Oryza sativa subsp. japonica (Rice).